Here is an 846-residue protein sequence, read N- to C-terminus: Inactive cap-specific mRNA (nucleoside-2'-O-)-methyltransferase 1B (846 aa).

Positions 30–50 (DDEDDFVDDPSPTEQKTKAEK) are disordered. The 47-residue stretch at 44–90 (QKTKAEKKMERMGYKAGEGLGKNKQGIQEPIAISFREGKAGLGHEQW) folds into the G-patch domain. Residues 184 to 413 (FFLNRSAMKT…ERFVVCKGLR (230 aa)) enclose the RrmJ-type SAM-dependent 2'-O-MTase domain.

The protein is Inactive cap-specific mRNA (nucleoside-2'-O-)-methyltransferase 1B of Caenorhabditis briggsae.